A 159-amino-acid polypeptide reads, in one-letter code: Keratin-associated protein 9-3 (159 aa).

A run of 16 repeats spans residues 8-12 (CCQPT), 13-17 (CCRTT), 32-36 (CCQPS), 37-41 (CCVSS), 46-50 (CCHPT), 51-55 (CCQNT), 56-60 (CCRTT), 61-65 (CCQPI), 70-74 (CCQPS), 75-79 (CCSTP), 80-84 (CCQPT), 85-89 (CCGSS), 129-133 (CCRPA), 134-138 (CCETT), 139-143 (CCRTT), and 153-157 (CCQPS). Positions 8–157 (CCQPTCCRTT…TCVYSCCQPS (150 aa)) are 16 X 5 AA repeats of C-C-[RQVSHE]-[SPTN]-[TASPI].

This sequence belongs to the KRTAP type 9 family. In terms of assembly, interacts with hair keratins.

Functionally, in the hair cortex, hair keratin intermediate filaments are embedded in an interfilamentous matrix, consisting of hair keratin-associated proteins (KRTAP), which are essential for the formation of a rigid and resistant hair shaft through their extensive disulfide bond cross-linking with abundant cysteine residues of hair keratins. The matrix proteins include the high-sulfur and high-glycine-tyrosine keratins. The protein is Keratin-associated protein 9-3 (KRTAP9-3) of Homo sapiens (Human).